Here is a 415-residue protein sequence, read N- to C-terminus: E3 ubiquitin-protein ligase RNF135 (415 aa).

The RING-type zinc finger occupies 21-67 (CIICQGLLDWPTTLPCGHSFCLQCLKDLWVSKRAGVDSCPWACPICR). Residues 181–206 (TFSASQKKIQEILRDLEKIQETLQGS) adopt a coiled-coil conformation. A B30.2/SPRY domain is found at 228-415 (PDQRYPVSRK…LTPGNYLEIL (188 aa)).

Homodimer. Interacts (homodimer) with RIGI (double-stranded RNA-bound oligomeric form); involved in both RIGI ubiquitination, oligomerization into filaments associated with viral RNAs and the bridging of these filaments. Interacts with UBE2D3 and UBE2N; E2 ubiquitin ligases involved in RNF135-mediated ubiquitination of RIGI and activation of the RIG-I signaling pathway. Interacts with PCBP2.

It localises to the cytoplasm. The protein resides in the stress granule. The catalysed reaction is S-ubiquitinyl-[E2 ubiquitin-conjugating enzyme]-L-cysteine + [acceptor protein]-L-lysine = [E2 ubiquitin-conjugating enzyme]-L-cysteine + N(6)-ubiquitinyl-[acceptor protein]-L-lysine.. It participates in protein modification; protein ubiquitination. Functionally, E2-dependent E3 ubiquitin-protein ligase that functions as a RIGI coreceptor in the sensing of viral RNAs in cell cytoplasm and the activation of the antiviral innate immune response. Together with the UBE2D3, UBE2N and UB2V1 E2 ligases, catalyzes the 'Lys-63'-linked polyubiquitination of RIGI oligomerized on viral RNAs, an essential step in the activation of the RIG-I signaling pathway. Through a ubiquitin-independent parallel mechanism, which consists in bridging RIGI filaments forming on longer viral RNAs, further activates the RIG-I signaling pathway. This second mechanism that synergizes with the ubiquitin-dependent one would thereby allow an RNA length-dependent regulation of the RIG-I signaling pathway. Associated with the E2 ligase UBE2N, also constitutively synthesizes unanchored 'Lys-63'-linked polyubiquitin chains that may also activate the RIG-I signaling pathway. The sequence is that of E3 ubiquitin-protein ligase RNF135 from Rattus norvegicus (Rat).